The primary structure comprises 136 residues: Holo-[acyl-carrier-protein] synthase (136 aa).

Mg(2+) is bound by residues Asp8 and Glu58.

It belongs to the P-Pant transferase superfamily. AcpS family. Mg(2+) is required as a cofactor.

It is found in the cytoplasm. The catalysed reaction is apo-[ACP] + CoA = holo-[ACP] + adenosine 3',5'-bisphosphate + H(+). Functionally, transfers the 4'-phosphopantetheine moiety from coenzyme A to a Ser of acyl-carrier-protein. This Leuconostoc mesenteroides subsp. mesenteroides (strain ATCC 8293 / DSM 20343 / BCRC 11652 / CCM 1803 / JCM 6124 / NCDO 523 / NBRC 100496 / NCIMB 8023 / NCTC 12954 / NRRL B-1118 / 37Y) protein is Holo-[acyl-carrier-protein] synthase.